The chain runs to 389 residues: Lipid-A-disaccharide synthase (389 aa).

It belongs to the LpxB family.

The enzyme catalyses a lipid X + a UDP-2-N,3-O-bis[(3R)-3-hydroxyacyl]-alpha-D-glucosamine = a lipid A disaccharide + UDP + H(+). It functions in the pathway bacterial outer membrane biogenesis; LPS lipid A biosynthesis. Functionally, condensation of UDP-2,3-diacylglucosamine and 2,3-diacylglucosamine-1-phosphate to form lipid A disaccharide, a precursor of lipid A, a phosphorylated glycolipid that anchors the lipopolysaccharide to the outer membrane of the cell. The polypeptide is Lipid-A-disaccharide synthase (Burkholderia ambifaria (strain MC40-6)).